The sequence spans 318 residues: L-lactate dehydrogenase (318 aa).

Residues Val-20, Asp-41, Lys-46, Tyr-71, and 85–86 contribute to the NAD(+) site; that span reads GA. Substrate-binding positions include Gln-88, Arg-94, and 126 to 129; that span reads NPVD. NAD(+) is bound by residues 124–126 and Ser-149; that span reads ATN. 154 to 157 contacts substrate; the sequence is DTAR. Positions 159 and 174 each coordinate beta-D-fructose 1,6-bisphosphate. The Proton acceptor role is filled by His-181. Tyr-226 bears the Phosphotyrosine mark. Thr-235 lines the substrate pocket.

Belongs to the LDH/MDH superfamily. LDH family. As to quaternary structure, homotetramer.

It localises to the cytoplasm. The catalysed reaction is (S)-lactate + NAD(+) = pyruvate + NADH + H(+). The protein operates within fermentation; pyruvate fermentation to lactate; (S)-lactate from pyruvate: step 1/1. Its activity is regulated as follows. Allosterically activated by fructose 1,6-bisphosphate (FBP). Its function is as follows. Catalyzes the conversion of lactate to pyruvate. In Priestia megaterium (Bacillus megaterium), this protein is L-lactate dehydrogenase.